The chain runs to 424 residues: UPF0229 protein PC1_1960 (424 aa).

Residues 46–109 (IESGESVSIP…GQGDASKDGE (64 aa)) form a disordered region. Residues 77–90 (PGNDHFVQNDKIER) are compositionally biased toward basic and acidic residues. Residues 92–101 (QGGGGGGSGQ) show a composition bias toward gly residues.

Belongs to the UPF0229 family.

The chain is UPF0229 protein PC1_1960 from Pectobacterium carotovorum subsp. carotovorum (strain PC1).